Here is a 98-residue protein sequence, read N- to C-terminus: Citrate lyase acyl carrier protein (98 aa).

At Ser-14 the chain carries O-(phosphoribosyl dephospho-coenzyme A)serine.

Belongs to the CitD family. Oligomer with a subunit composition of (alpha,beta,gamma)6.

The protein localises to the cytoplasm. Covalent carrier of the coenzyme of citrate lyase. The sequence is that of Citrate lyase acyl carrier protein from Vibrio cholerae serotype O1 (strain ATCC 39315 / El Tor Inaba N16961).